A 136-amino-acid polypeptide reads, in one-letter code: MRHYEIIFLVHPDQSEQVGGMVERYTKLIEEDGGKIHRLEDWGRRQLAYAINNVHKAHYVLINVECSGKALSELEDNFRYNDAVIRNLVIRRDEAITGQSEMLKAEENRSERRERRERPEHGGHEGLDGDSDKADE.

The segment at 99-136 (QSEMLKAEENRSERRERRERPEHGGHEGLDGDSDKADE) is disordered. Basic and acidic residues predominate over residues 103–136 (LKAEENRSERRERRERPEHGGHEGLDGDSDKADE).

This sequence belongs to the bacterial ribosomal protein bS6 family.

Functionally, binds together with bS18 to 16S ribosomal RNA. This chain is Small ribosomal subunit protein bS6, found in Azotobacter vinelandii (strain DJ / ATCC BAA-1303).